The primary structure comprises 667 residues: DNA ligase (667 aa).

NAD(+) contacts are provided by residues 32-36 (DSVYD), 81-82 (SL), and glutamate 111. The active-site N6-AMP-lysine intermediate is lysine 113. 4 residues coordinate NAD(+): arginine 134, glutamate 168, lysine 285, and lysine 309. Positions 403, 406, 421, and 426 each coordinate Zn(2+). Residues 588–667 (VGDNPFAGKT…DNLIEQLNLI (80 aa)) form the BRCT domain.

The protein belongs to the NAD-dependent DNA ligase family. LigA subfamily. Mg(2+) serves as cofactor. The cofactor is Mn(2+).

The enzyme catalyses NAD(+) + (deoxyribonucleotide)n-3'-hydroxyl + 5'-phospho-(deoxyribonucleotide)m = (deoxyribonucleotide)n+m + AMP + beta-nicotinamide D-nucleotide.. Functionally, DNA ligase that catalyzes the formation of phosphodiester linkages between 5'-phosphoryl and 3'-hydroxyl groups in double-stranded DNA using NAD as a coenzyme and as the energy source for the reaction. It is essential for DNA replication and repair of damaged DNA. The chain is DNA ligase from Lysinibacillus sphaericus (strain C3-41).